The primary structure comprises 491 residues: Probable glycine dehydrogenase (decarboxylating) subunit 2 (491 aa).

At lysine 273 the chain carries N6-(pyridoxal phosphate)lysine.

The protein belongs to the GcvP family. C-terminal subunit subfamily. In terms of assembly, the glycine cleavage system is composed of four proteins: P, T, L and H. In this organism, the P 'protein' is a heterodimer of two subunits. Requires pyridoxal 5'-phosphate as cofactor.

The enzyme catalyses N(6)-[(R)-lipoyl]-L-lysyl-[glycine-cleavage complex H protein] + glycine + H(+) = N(6)-[(R)-S(8)-aminomethyldihydrolipoyl]-L-lysyl-[glycine-cleavage complex H protein] + CO2. In terms of biological role, the glycine cleavage system catalyzes the degradation of glycine. The P protein binds the alpha-amino group of glycine through its pyridoxal phosphate cofactor; CO(2) is released and the remaining methylamine moiety is then transferred to the lipoamide cofactor of the H protein. The protein is Probable glycine dehydrogenase (decarboxylating) subunit 2 of Bacillus velezensis (strain DSM 23117 / BGSC 10A6 / LMG 26770 / FZB42) (Bacillus amyloliquefaciens subsp. plantarum).